The chain runs to 24 residues: Caerulein precursor fragment B4 (24 aa).

Expressed by the skin glands.

Its subcellular location is the secreted. In terms of biological role, has antibacterial and antifungal activity. The polypeptide is Caerulein precursor fragment B4 (Xenopus borealis (Kenyan clawed frog)).